Reading from the N-terminus, the 85-residue chain is UPF0297 protein CLL_A1175 (85 aa).

This sequence belongs to the UPF0297 family.

In Clostridium botulinum (strain Eklund 17B / Type B), this protein is UPF0297 protein CLL_A1175.